The sequence spans 503 residues: CDK5 regulatory subunit-associated protein 3 (503 aa).

3 consecutive short sequence motifs (shuffled ATG8-binding motif) follow at residues 266–269 (IDWG), 288–291 (IDWG), and 306–309 (IDWG). Residues 268–503 (WGDFGVEAVS…RPVNLMGTSL (236 aa)) form a required for interaction with UFL1 and mediates interaction with CHEK1 region. Residues 352-367 (DELMELEIFLSQRAVE) are RPL10a-binding domain (RBD). Lys-447 participates in a covalent cross-link: Glycyl lysine isopeptide (Lys-Gly) (interchain with G-Cter in SUMO2).

Belongs to the CDK5RAP3 family. As to quaternary structure, substrate adapter component of the UFM1 ribosome E3 ligase (UREL) complex, composed of UFL1, DDRGK1 and CDK5RAP3. Interaction with UFL1 anchors CDK5RAP3 in the cytoplasm, preventing its translocation to the nucleus which allows expression of the CCND1 cyclin and progression of cells through the G1/S transition. Interacts with ATG8 family proteins MAP1LC3A, MAP1LC3B, GABARAP, GABARAPL1 and GABARAPL2. Interacts with CDK5R1; competes with CDK5RAP1 and CDK5RAP2. Interacts with RELA. Interacts with CHEK1; may negatively regulate CHEK1 and thereby stimulate entry into mitosis. Interacts with CDKN2A/ARF and MDM2; forms a ternary complex involved in regulation of p53/TP53. Interacts with MAPK14. Interacts with CCNB1. Interacts with TUBG1; may regulate CDK5RAP3 in mitotic G2/M transition checkpoint. May be phosphorylated by CDK5. Post-translationally, ubiquitinated. Probably triggers proteasomal degradation and is negatively regulated by UFL1. In terms of processing, may be ufmylated. Cleaved by caspases early during apoptosis, the resulting peptides may play a role in rupture of the nuclear envelope. In terms of tissue distribution, widely expressed with higher expression in secretory tissues.

The protein localises to the endoplasmic reticulum membrane. Its subcellular location is the cytoplasm. It is found in the nucleus. It localises to the cytoskeleton. The protein resides in the microtubule organizing center. The protein localises to the centrosome. Functionally, substrate adapter of E3 ligase complexes mediating ufmylation, the covalent attachment of the ubiquitin-like modifier UFM1 to substrate proteins, and which is involved in various processes, such as ribosome recycling and reticulophagy (also called ER-phagy). As part of the UREL complex, plays a key role in ribosome recycling by promoting mono-ufmylation of RPL26/uL24 subunit of the 60S ribosome. Ufmylation of RPL26/uL24 occurs on free 60S ribosomes following ribosome dissociation: it weakens the junction between post-termination 60S subunits and SEC61 translocons, promoting release and recycling of the large ribosomal subunit from the endoplasmic reticulum membrane. Ufmylation of RPL26/uL24 and subsequent 60S ribosome recycling either take place after normal termination of translation or after ribosome stalling during cotranslational translocation at the endoplasmic reticulum. Within the UREL complex, CDK5RAP3 acts as a substrate adapter that constrains UFL1 ligase activity to mono-ufmylate RPL26/uL24 at 'Lys-134'. The UREL complex is also involved in reticulophagy in response to endoplasmic reticulum stress by promoting ufmylation of proteins such as CYB5R3, thereby promoting lysosomal degradation of ufmylated proteins. Also acts as a regulator of transcription: negatively regulates NF-kappa-B-mediated gene transcription through the control of RELA phosphorylation. Also regulates mitotic G2/M transition checkpoint and mitotic G2 DNA damage checkpoint. Through its interaction with CDKN2A/ARF and MDM2 may induce MDM2-dependent p53/TP53 ubiquitination, stabilization and activation in the nucleus, thereby promoting G1 cell cycle arrest and inhibition of cell proliferation. May also play a role in the rupture of the nuclear envelope during apoptosis. May regulate MAPK14 activity by regulating its dephosphorylation by PPM1D/WIP1. Required for liver development. The protein is CDK5 regulatory subunit-associated protein 3 of Mus musculus (Mouse).